A 938-amino-acid polypeptide reads, in one-letter code: Glutamate receptor ionotropic, NMDA 1 (938 aa).

The first 18 residues, methionine 1 to alanine 18, serve as a signal peptide directing secretion. The Extracellular segment spans residues arginine 19–glutamine 559. Asparagine 61, asparagine 203, asparagine 239, asparagine 276, asparagine 300, asparagine 350, asparagine 368, asparagine 440, asparagine 471, and asparagine 491 each carry an N-linked (GlcNAc...) asparagine glycan. Residues cysteine 79 and cysteine 308 are joined by a disulfide bond. 2 disulfide bridges follow: cysteine 420–cysteine 454 and cysteine 436–cysteine 455. Residues proline 516, threonine 518, and arginine 523 each contribute to the glycine site. The chain crosses the membrane as a helical span at residues serine 560 to leucine 580. Residues aspartate 581 to serine 604 are Cytoplasmic-facing. The interval leucine 603–proline 624 is pore-forming. Residues serine 605–leucine 615 constitute an intramembrane region (discontinuously helical). At asparagine 616–phenylalanine 627 the chain is on the cytoplasmic side. A helical transmembrane segment spans residues serine 628–threonine 648. Over alanine 649–glutamate 811 the chain is Extracellular. Asparagine 674 is a glycosylation site (N-linked (GlcNAc...) asparagine). Residues serine 688 and aspartate 732 each coordinate glycine. Cysteine 744 and cysteine 798 are disulfide-bonded. Asparagine 771 is a glycosylation site (N-linked (GlcNAc...) asparagine). The helical transmembrane segment at asparagine 812 to isoleucine 835 threads the bilayer. Residues alanine 836 to serine 938 lie on the Cytoplasmic side of the membrane. Serine 889, serine 890, serine 896, and serine 897 each carry phosphoserine; by PKC. Positions serine 889–serine 938 are disordered. A compositionally biased stretch (basic and acidic residues) spans valine 916 to glycine 927.

The protein belongs to the glutamate-gated ion channel (TC 1.A.10.1) family. NR1/GRIN1 subfamily. As to quaternary structure, heterotetramer; the NMDAR subunits are modular and harbor tiered domains that function in concert to regulate opening and closing of the cation-selective ion channel pore. Forms heterotetrameric channels composed of two GluN1/zeta subunits (GRIN1), and two identical GluN2/epsilon subunits (GRIN2A, GRIN2B, GRIN2C or GRIN2D) or GluN3 subunits (GRIN3A or GRIN3B) (in vitro). Can also form heterotetrameric channels that contain at least two GluN1 subunits and at least two different GluN2 subunits (or a combination of one GluN2 and one GluN3 subunits) (in vitro). In vivo, the subunit composition may vary in function of the expression levels of the different subunits. Found in a complex with GRIN2A or GRIN2B, GRIN3A and PPP2CB. Found in a complex with GRIN2A or GRIN2B and GRIN3B. Interacts with SNX27 (via PDZ domain); the interaction is required for recycling to the plasma membrane when endocytosed and prevent degradation in lysosomes. Interacts with DLG4 and MPDZ. Interacts with LRFN1 and LRFN2. Interacts with MYZAP. Found in a complex with DLG4 and PRR7. Found in a complex with GRIN2B and PRR7. Interacts with PRR7; the interaction is reduced following NMDA receptor activity. In terms of processing, NMDA is probably regulated by C-terminal phosphorylation of an isoform of GRIN1 by PKC. Dephosphorylated on Ser-897 probably by protein phosphatase 2A (PPP2CB). Its phosphorylated state is influenced by the formation of the NMDAR-PPP2CB complex and the NMDAR channel activity.

It localises to the cell membrane. Its subcellular location is the postsynaptic cell membrane. The protein localises to the postsynaptic density membrane. The protein resides in the synaptic cell membrane. The catalysed reaction is Ca(2+)(in) = Ca(2+)(out). The enzyme catalyses Na(+)(in) = Na(+)(out). It carries out the reaction K(+)(in) = K(+)(out). Its activity is regulated as follows. NMDA glutamate receptor activity is inhbited by Mg2(+) in a voltage-dependent manner; Mg2(+)-induced blockade occurs only at negative potentials and decreases with membrane depolarization. 7-chlorokynurenate (50 uM) or Zn2(+) (100 uM) partially inhibit the NMDA glutamate receptor activity, while acide 2-amino-5-phosphonovalerique(100 uM) almost completely blocked the NMDA glutamate receptor activity. Dizocilpine (1 uM) results in long lasting and almost complete block of the NMDA glutamate receptor activity. Functionally, component of N-methyl-D-aspartate (NMDA) receptors (NMDARs) that function as heterotetrameric, ligand-gated cation channels with high calcium permeability and voltage-dependent block by Mg(2+). NMDARs participate in synaptic plasticity for learning and memory formation by contributing to the long-term potentiation (LTP). Channel activation requires binding of the neurotransmitter L-glutamate to the GluN2 subunit, glycine or D-serine binding to the GluN1 subunit, plus membrane depolarization to eliminate channel inhibition by Mg(2+). NMDARs mediate simultaneously the potasium efflux and the influx of calcium and sodium. Each GluN2 or GluN3 subunit confers differential attributes to channel properties, including activation, deactivation and desensitization kinetics, pH sensitivity, Ca2(+) permeability, and binding to allosteric modulators. This is Glutamate receptor ionotropic, NMDA 1 from Homo sapiens (Human).